Here is a 208-residue protein sequence, read N- to C-terminus: Protein-L-isoaspartate O-methyltransferase (208 aa).

Residue S59 is part of the active site.

The protein belongs to the methyltransferase superfamily. L-isoaspartyl/D-aspartyl protein methyltransferase family.

The protein localises to the cytoplasm. The catalysed reaction is [protein]-L-isoaspartate + S-adenosyl-L-methionine = [protein]-L-isoaspartate alpha-methyl ester + S-adenosyl-L-homocysteine. Its function is as follows. Catalyzes the methyl esterification of L-isoaspartyl residues in peptides and proteins that result from spontaneous decomposition of normal L-aspartyl and L-asparaginyl residues. It plays a role in the repair and/or degradation of damaged proteins. In Yersinia pseudotuberculosis serotype O:1b (strain IP 31758), this protein is Protein-L-isoaspartate O-methyltransferase.